The chain runs to 1042 residues: Glutamate dehydrogenase 2 (1042 aa).

Lys596 is an active-site residue. Arg763 is subject to ADP-ribosylarginine; by Legionella Lart1.

The protein belongs to the Glu/Leu/Phe/Val dehydrogenases family. In terms of assembly, homodimer. (Microbial infection) ADP-ribosylated at Arg-763 by the Legionella pneumophila effector Lart1, which inhibits the glutamate dehydrogenase activity. Amoeba are natural hosts of Legionella, and ADP-ribosylation by Lart1 may promote Legionella parasitism.

It localises to the cytoplasm. It catalyses the reaction L-glutamate + NAD(+) + H2O = 2-oxoglutarate + NH4(+) + NADH + H(+). With respect to regulation, activity is stimulated by AMP. (Microbial infection) Inhibited by ADP-ribosylation. The polypeptide is Glutamate dehydrogenase 2 (glud2) (Dictyostelium discoideum (Social amoeba)).